We begin with the raw amino-acid sequence, 1462 residues long: Protein peg1 (1462 aa).

2 disordered regions span residues 528–563 and 573–592; these read SFSK…SRER and FHST…SIAI. Composition is skewed to low complexity over residues 538 to 552 and 574 to 589; these read SSNS…RLGL and HSTS…HSPS. Position 599 is a phosphoserine (Ser599). Residues 838-928 form a disordered region; the sequence is SSTHQEHLSK…NCSEESLDDH (91 aa). The segment covering 847 to 866 has biased composition (low complexity); sequence KNLPTLNTSSSSNSSQTDLL. The segment covering 870 to 896 has biased composition (basic and acidic residues); the sequence is GKGETKETEMQSPIESKEGLLSKDTHI. Phosphoserine is present on Ser1221. A coiled-coil region spans residues 1342 to 1367; sequence TLIAEIADLQGLYEFTQQRLQSLNTE.

It belongs to the CLASP family. Interacts with microtubules. Interacts with dhc1, mal3 and tea1.

The protein resides in the cytoplasm. It localises to the cytoskeleton. Its subcellular location is the spindle. It is found in the microtubule organizing center. The protein localises to the spindle pole body. Microtubule binding protein that regulates the stability of dynamic microtubules. Required for mitotic spindle formation. The chain is Protein peg1 (peg1) from Schizosaccharomyces pombe (strain 972 / ATCC 24843) (Fission yeast).